The following is a 408-amino-acid chain: Glyceraldehyde-3-phosphate dehydrogenase, testis-specific (408 aa).

A testis-specific N-terminal extension region spans residues 1–73; sequence MSKRDIVLTN…TPPPKMVSVA (73 aa). The disordered stretch occupies residues 19–68; that stretch reads QPCPVTRAPPPPEPKAEVEPQPQPEPTPVREEIKPPPPPLPPHPATPPPK. Over residues 53–68 the composition is skewed to pro residues; it reads PPPPPLPPHPATPPPK. NAD(+) contacts are provided by residues 85-86, D106, K151, Y173, and S193; that span reads RI. D-glyceraldehyde 3-phosphate-binding positions include 223-225, T254, 283-284, and R306; these read SCT and TG. Catalysis depends on C224, which acts as the Nucleophile. Residue N388 participates in NAD(+) binding.

This sequence belongs to the glyceraldehyde-3-phosphate dehydrogenase family. In terms of assembly, homotetramer. Interacts with ARRB2; the interaction is detected in the nucleus upon OR1D2 stimulation. In terms of tissue distribution, testis specific.

Its subcellular location is the cytoplasm. The catalysed reaction is D-glyceraldehyde 3-phosphate + phosphate + NAD(+) = (2R)-3-phospho-glyceroyl phosphate + NADH + H(+). The protein operates within carbohydrate degradation; glycolysis; pyruvate from D-glyceraldehyde 3-phosphate: step 1/5. May play an important role in regulating the switch between different pathways for energy production during spermiogenesis and in the spermatozoon. Required for sperm motility and male fertility. The chain is Glyceraldehyde-3-phosphate dehydrogenase, testis-specific (GAPDHS) from Homo sapiens (Human).